We begin with the raw amino-acid sequence, 212 residues long: Peptide methionine sulfoxide reductase MsrA (212 aa).

The active site involves Cys-52.

It belongs to the MsrA Met sulfoxide reductase family.

The catalysed reaction is L-methionyl-[protein] + [thioredoxin]-disulfide + H2O = L-methionyl-(S)-S-oxide-[protein] + [thioredoxin]-dithiol. It catalyses the reaction [thioredoxin]-disulfide + L-methionine + H2O = L-methionine (S)-S-oxide + [thioredoxin]-dithiol. Functionally, has an important function as a repair enzyme for proteins that have been inactivated by oxidation. Catalyzes the reversible oxidation-reduction of methionine sulfoxide in proteins to methionine. In Escherichia coli O127:H6 (strain E2348/69 / EPEC), this protein is Peptide methionine sulfoxide reductase MsrA.